Here is a 457-residue protein sequence, read N- to C-terminus: MELTAVLLLLGLCSAGTVLGSEHETRLVAKLFKDYSSVVRPVGDHREIVQVTVGLQLIQLINVDEVNQIVTTNVRLKQQWVDYNLKWNPDDYGGVKKIHIPSEKIWRPDVVLYNNADGDFAIVKFTKVLLDYTGHITWTPPAIFKSYCEIIVTHFPFDEQNCSMKLGTWTYDGSVVAINPESDQPDLSNFMESGEWVIKEARGWKHWVFYSCCPNTPYLDITYHFVMQRLPLYFIVNVIIPCLLFSFLTSLVFYLPTDSGEKMTLSISVLLSLTVFLLVIVELIPSTSSAVPLIGKYMLFTMVFVIASIIITVIVINTHHRSPSTHIMPEWVRKVFIDTIPNIMFFSTMKRPSRDKQEKRIFTEDIDISDISGKPGPPPMGFHSPLIKHPEVKSAIEGVKYIAETMKSDQESNNASEEWKYVAMVMDHILLGVFMLVCLIGTLAVFAGRLIELHQQG.

The signal sequence occupies residues 1–20 (MELTAVLLLLGLCSAGTVLG). The Extracellular portion of the chain corresponds to 21 to 230 (SEHETRLVAK…ITYHFVMQRL (210 aa)). 2 disulfide bridges follow: cysteine 148–cysteine 162 and cysteine 212–cysteine 213. Asparagine 161 carries N-linked (GlcNAc...) asparagine glycosylation. A run of 3 helical transmembrane segments spans residues 231–255 (PLYF…VFYL), 263–281 (MTLS…LVIV), and 297–316 (YMLF…VIVI). Over 317-428 (NTHHRSPSTH…WKYVAMVMDH (112 aa)) the chain is Cytoplasmic. Residues 429–447 (ILLGVFMLVCLIGTLAVFA) traverse the membrane as a helical segment.

The protein belongs to the ligand-gated ion channel (TC 1.A.9) family. Acetylcholine receptor (TC 1.A.9.1) subfamily. Alpha-1/CHRNA1 sub-subfamily. As to quaternary structure, one of the alpha chains that assemble within the acetylcholine receptor, a pentamer of two alpha chains, a beta, a delta, and a gamma (in immature muscle) or epsilon (in mature muscle) chains. The muscle heteropentamer composed of alpha-1, beta-1, delta, epsilon subunits interacts with the alpha-conotoxin ImII.

It localises to the postsynaptic cell membrane. It is found in the cell membrane. It carries out the reaction K(+)(in) = K(+)(out). The enzyme catalyses Na(+)(in) = Na(+)(out). Its function is as follows. Upon acetylcholine binding, the AChR responds by an extensive change in conformation that affects all subunits and leads to opening of an ion-conducting channel across the plasma membrane. The polypeptide is Acetylcholine receptor subunit alpha (Chrna1) (Rattus norvegicus (Rat)).